A 111-amino-acid chain; its full sequence is Flagellar hook-basal body complex protein FliE (111 aa).

This sequence belongs to the FliE family.

The protein localises to the bacterial flagellum basal body. The protein is Flagellar hook-basal body complex protein FliE of Sinorhizobium fredii (strain NBRC 101917 / NGR234).